Here is a 393-residue protein sequence, read N- to C-terminus: NAD(P)H-quinone oxidoreductase subunit H, chloroplastic (393 aa).

It belongs to the complex I 49 kDa subunit family. As to quaternary structure, NDH is composed of at least 16 different subunits, 5 of which are encoded in the nucleus.

It localises to the plastid. The protein resides in the chloroplast thylakoid membrane. The enzyme catalyses a plastoquinone + NADH + (n+1) H(+)(in) = a plastoquinol + NAD(+) + n H(+)(out). It catalyses the reaction a plastoquinone + NADPH + (n+1) H(+)(in) = a plastoquinol + NADP(+) + n H(+)(out). Its function is as follows. NDH shuttles electrons from NAD(P)H:plastoquinone, via FMN and iron-sulfur (Fe-S) centers, to quinones in the photosynthetic chain and possibly in a chloroplast respiratory chain. The immediate electron acceptor for the enzyme in this species is believed to be plastoquinone. Couples the redox reaction to proton translocation, and thus conserves the redox energy in a proton gradient. The chain is NAD(P)H-quinone oxidoreductase subunit H, chloroplastic from Carica papaya (Papaya).